Consider the following 406-residue polypeptide: Synaptic vesicle membrane protein VAT-1 homolog (406 aa).

The disordered stretch occupies residues 1–57 (MSAEREAAEAATVAAATEAGAETGTGAGEGAPSQPPTVEVASDPQPPPAPEASASAS). N-acetylserine is present on Ser2. A Phosphoserine modification is found at Ser2. Residues 9-22 (EAATVAAATEAGAE) are compositionally biased toward low complexity. Phosphoserine occurs at positions 33 and 42.

It belongs to the zinc-containing alcohol dehydrogenase family. Quinone oxidoreductase subfamily.

The protein localises to the cytoplasm. It localises to the mitochondrion outer membrane. In terms of biological role, plays a part in calcium-regulated keratinocyte activation in epidermal repair mechanisms. Has no effect on cell proliferation. Possesses ATPase activity. Negatively regulates mitochondrial fusion in cooperation with mitofusin proteins (MFN1-2). The chain is Synaptic vesicle membrane protein VAT-1 homolog (Vat1) from Mus musculus (Mouse).